A 95-amino-acid polypeptide reads, in one-letter code: Small ribosomal subunit protein uS17 (95 aa).

The protein belongs to the universal ribosomal protein uS17 family. As to quaternary structure, part of the 30S ribosomal subunit.

Functionally, one of the primary rRNA binding proteins, it binds specifically to the 5'-end of 16S ribosomal RNA. In Psychrobacter sp. (strain PRwf-1), this protein is Small ribosomal subunit protein uS17.